Here is a 494-residue protein sequence, read N- to C-terminus: Lysine--tRNA ligase (494 aa).

Positions 405 and 412 each coordinate Mg(2+).

It belongs to the class-II aminoacyl-tRNA synthetase family. Homodimer. Mg(2+) is required as a cofactor.

The protein resides in the cytoplasm. The enzyme catalyses tRNA(Lys) + L-lysine + ATP = L-lysyl-tRNA(Lys) + AMP + diphosphate. The polypeptide is Lysine--tRNA ligase (lysS) (Geobacillus stearothermophilus (Bacillus stearothermophilus)).